The chain runs to 787 residues: Mitochondrial intermediate peptidase (787 aa).

Residues 1–36 constitute a mitochondrion transit peptide; sequence MQNKVLRGILFKNVPLGYSYNRSIRHPTFGNSIIRW. Zn(2+) is bound at residue His-573. The active site involves Glu-574. Zn(2+) contacts are provided by His-577 and His-580.

Belongs to the peptidase M3 family. Zn(2+) serves as cofactor.

It is found in the mitochondrion matrix. The catalysed reaction is Release of an N-terminal octapeptide as second stage of processing of some proteins imported into the mitochondrion.. In terms of biological role, cleaves proteins, imported into the mitochondrion, to their mature size. While most mitochondrial precursor proteins are processed to the mature form in one step by mitochondrial processing peptidase (MPP), the sequential cleavage by MIP of an octapeptide after initial processing by MPP is a required step for a subgroup of nuclear-encoded precursor proteins destined for the matrix or the inner membrane. This Vanderwaltozyma polyspora (strain ATCC 22028 / DSM 70294 / BCRC 21397 / CBS 2163 / NBRC 10782 / NRRL Y-8283 / UCD 57-17) (Kluyveromyces polysporus) protein is Mitochondrial intermediate peptidase (OCT1).